The sequence spans 506 residues: Trans-cinnamate 4-monooxygenase C4H1 (506 aa).

2 short sequence motifs (nuclear localization signal) span residues 161 to 168 (VKKMPESA) and 247 to 254 (QRRLQLFK). C448 provides a ligand contact to heme.

This sequence belongs to the cytochrome P450 family. Requires heme as cofactor.

Its subcellular location is the nucleus. It catalyses the reaction (E)-cinnamate + reduced [NADPH--hemoprotein reductase] + O2 = (E)-4-coumarate + oxidized [NADPH--hemoprotein reductase] + H2O + H(+). The protein operates within phenylpropanoid metabolism; trans-4-coumarate biosynthesis; trans-4-coumarate from trans-cinnamate: step 1/1. Functionally, component of the floral volatile benzenoid/phenylpropanoid (FVBP) biosynthetic pathway that controls carbon flux to pigments essential for pollination or UV protection, to numerous pytoalexins synthesized by plants when challenged by pathogens, and to lignins. This chain is Trans-cinnamate 4-monooxygenase C4H1, found in Petunia hybrida (Petunia).